Reading from the N-terminus, the 543-residue chain is Proline--tRNA ligase, chloroplastic/mitochondrial (543 aa).

The segment at 41–63 is disordered; the sequence is ATAPSGTASPETKSSEVDRLRSD. The segment covering 53–63 has biased composition (basic and acidic residues); sequence KSSEVDRLRSD.

This sequence belongs to the class-II aminoacyl-tRNA synthetase family.

It localises to the plastid. The protein resides in the chloroplast. Its subcellular location is the mitochondrion. It catalyses the reaction tRNA(Pro) + L-proline + ATP = L-prolyl-tRNA(Pro) + AMP + diphosphate. Functionally, catalyzes the attachment of proline to tRNA(Pro) in a two-step reaction: proline is first activated by ATP to form Pro-AMP and then transferred to the acceptor end of tRNA(Pro). The chain is Proline--tRNA ligase, chloroplastic/mitochondrial from Arabidopsis thaliana (Mouse-ear cress).